Consider the following 442-residue polypeptide: HTH-type transcriptional regulator NorG (442 aa).

Residues 2–46 (KIPSQRQLAIQYNVNRVTIIKSIELLEAEGFIYTKVGSGTYVNDY) form the HTH gntR-type domain. The segment at residues 6–25 (QRQLAIQYNVNRVTIIKSIE) is a DNA-binding region (H-T-H motif). At Lys288 the chain carries N6-(pyridoxal phosphate)lysine.

In the C-terminal section; belongs to the class-I pyridoxal-phosphate-dependent aminotransferase family. Pyridoxal 5'-phosphate serves as cofactor.

In terms of biological role, positively regulates the expression of the NorB efflux pump and negatively regulates the expression of the AbcA efflux pump. Binds specifically to the promoters of norA, norB and norC and abcA genes. Could also have an aminotransferase activity. The sequence is that of HTH-type transcriptional regulator NorG (norG) from Staphylococcus aureus (strain bovine RF122 / ET3-1).